A 226-amino-acid polypeptide reads, in one-letter code: Octanoyltransferase (226 aa).

A BPL/LPL catalytic domain is found at 34 to 212; the sequence is LAAPDVLLTL…AFSRVFGLEF (179 aa). Substrate contacts are provided by residues 76 to 83, 143 to 145, and 156 to 158; these read RGGDVTYH, AIG, and GIA. Cysteine 174 acts as the Acyl-thioester intermediate in catalysis.

It belongs to the LipB family.

The protein resides in the cytoplasm. The catalysed reaction is octanoyl-[ACP] + L-lysyl-[protein] = N(6)-octanoyl-L-lysyl-[protein] + holo-[ACP] + H(+). The protein operates within protein modification; protein lipoylation via endogenous pathway; protein N(6)-(lipoyl)lysine from octanoyl-[acyl-carrier-protein]: step 1/2. Functionally, catalyzes the transfer of endogenously produced octanoic acid from octanoyl-acyl-carrier-protein onto the lipoyl domains of lipoate-dependent enzymes. Lipoyl-ACP can also act as a substrate although octanoyl-ACP is likely to be the physiological substrate. The protein is Octanoyltransferase of Thermosynechococcus vestitus (strain NIES-2133 / IAM M-273 / BP-1).